The chain runs to 556 residues: Oxygen-dependent choline dehydrogenase (556 aa).

An FAD-binding site is contributed by 6-35 (DYIIIGAGSAGNVLAARLTEDPGVTVLLLE). The Proton acceptor role is filled by H475.

Belongs to the GMC oxidoreductase family. It depends on FAD as a cofactor.

It carries out the reaction choline + A = betaine aldehyde + AH2. It catalyses the reaction betaine aldehyde + NAD(+) + H2O = glycine betaine + NADH + 2 H(+). Its pathway is amine and polyamine biosynthesis; betaine biosynthesis via choline pathway; betaine aldehyde from choline (cytochrome c reductase route): step 1/1. Involved in the biosynthesis of the osmoprotectant glycine betaine. Catalyzes the oxidation of choline to betaine aldehyde and betaine aldehyde to glycine betaine at the same rate. This is Oxygen-dependent choline dehydrogenase from Xanthomonas axonopodis pv. citri (strain 306).